The chain runs to 230 residues: MSQSYNNIDGLLLLDKPFGITSFDAVYKIKKVLNVEKTGHCGTLDPASTGLLLVLMGKATKLQAKFMKKDKVYLSSFLLGMVTDSGDLDGKVISENSVLNINIEKIKKMVEMFEGEIFQIPPMYSALKYNGKKLCELARQGIEVERKPRKVTIKKFEVLSYDGDIVKVRIECSSGTYIRTLAQDLGNVLKCGATVKTLRREKIDIFDIKDALRFKDTDSADKIIKKLIPL.

The Nucleophile role is filled by D45.

This sequence belongs to the pseudouridine synthase TruB family. Type 1 subfamily.

The enzyme catalyses uridine(55) in tRNA = pseudouridine(55) in tRNA. Responsible for synthesis of pseudouridine from uracil-55 in the psi GC loop of transfer RNAs. This chain is tRNA pseudouridine synthase B, found in Endomicrobium trichonymphae.